The following is a 560-amino-acid chain: Membrane protein insertase YidC (560 aa).

A helical membrane pass occupies residues 7–27; the sequence is ILIVALAIVSYVMVLKWNQDY. The segment covering 38 to 56 has biased composition (polar residues); sequence ASSTTTSGLPDTATGNNAA. The interval 38 to 76 is disordered; sequence ASSTTTSGLPDTATGNNAAASDDIPRAASDTSAPAETPV. Transmembrane regions (helical) follow at residues 367–387, 437–457, 468–488, and 515–535; these read IVGN…GIFF, LGGC…YWVL, FMLW…PIIM, and PIIF…YWVV.

This sequence belongs to the OXA1/ALB3/YidC family. Type 1 subfamily. As to quaternary structure, interacts with the Sec translocase complex via SecD. Specifically interacts with transmembrane segments of nascent integral membrane proteins during membrane integration.

The protein resides in the cell inner membrane. In terms of biological role, required for the insertion and/or proper folding and/or complex formation of integral membrane proteins into the membrane. Involved in integration of membrane proteins that insert both dependently and independently of the Sec translocase complex, as well as at least some lipoproteins. Aids folding of multispanning membrane proteins. The protein is Membrane protein insertase YidC of Pseudomonas fluorescens (strain Pf0-1).